Reading from the N-terminus, the 336-residue chain is Dihydroorotate dehydrogenase (quinone) (336 aa).

FMN is bound by residues alanine 62–lysine 66 and threonine 86. Lysine 66 provides a ligand contact to substrate. Asparagine 111–phenylalanine 115 serves as a coordination point for substrate. The FMN site is built by asparagine 139 and asparagine 172. Asparagine 172 provides a ligand contact to substrate. The active-site Nucleophile is the serine 175. Residue asparagine 177 coordinates substrate. Lysine 217 and threonine 245 together coordinate FMN. Asparagine 246 to threonine 247 provides a ligand contact to substrate. Residues glycine 268, glycine 297, and tyrosine 318 to serine 319 contribute to the FMN site.

It belongs to the dihydroorotate dehydrogenase family. Type 2 subfamily. In terms of assembly, monomer. FMN is required as a cofactor.

It is found in the cell membrane. It catalyses the reaction (S)-dihydroorotate + a quinone = orotate + a quinol. It functions in the pathway pyrimidine metabolism; UMP biosynthesis via de novo pathway; orotate from (S)-dihydroorotate (quinone route): step 1/1. Catalyzes the conversion of dihydroorotate to orotate with quinone as electron acceptor. The polypeptide is Dihydroorotate dehydrogenase (quinone) (Pectobacterium atrosepticum (strain SCRI 1043 / ATCC BAA-672) (Erwinia carotovora subsp. atroseptica)).